A 379-amino-acid polypeptide reads, in one-letter code: GDSL esterase/lipase EXL2 (379 aa).

The first 35 residues, 1–35 (MKRNSINIHHVTSFSSSPFWCVFFLVLLCKTSTNA), serve as a signal peptide directing secretion. N-linked (GlcNAc...) asparagine glycosylation occurs at asparagine 42. Serine 54 functions as the Nucleophile in the catalytic mechanism. Residues aspartate 358 and histidine 361 contribute to the active site.

Belongs to the 'GDSL' lipolytic enzyme family.

It is found in the secreted. The sequence is that of GDSL esterase/lipase EXL2 (EXL2) from Arabidopsis thaliana (Mouse-ear cress).